A 201-amino-acid chain; its full sequence is Pyridoxal 5'-phosphate synthase subunit PdxT (201 aa).

50–52 serves as a coordination point for L-glutamine; the sequence is GES. Cysteine 82 functions as the Nucleophile in the catalytic mechanism. Residues arginine 115 and 143 to 144 contribute to the L-glutamine site; that span reads IR. Catalysis depends on charge relay system residues histidine 179 and glutamate 181.

It belongs to the glutaminase PdxT/SNO family. As to quaternary structure, in the presence of PdxS, forms a dodecamer of heterodimers. Only shows activity in the heterodimer.

It catalyses the reaction aldehydo-D-ribose 5-phosphate + D-glyceraldehyde 3-phosphate + L-glutamine = pyridoxal 5'-phosphate + L-glutamate + phosphate + 3 H2O + H(+). It carries out the reaction L-glutamine + H2O = L-glutamate + NH4(+). The protein operates within cofactor biosynthesis; pyridoxal 5'-phosphate biosynthesis. Functionally, catalyzes the hydrolysis of glutamine to glutamate and ammonia as part of the biosynthesis of pyridoxal 5'-phosphate. The resulting ammonia molecule is channeled to the active site of PdxS. The sequence is that of Pyridoxal 5'-phosphate synthase subunit PdxT from Deinococcus geothermalis (strain DSM 11300 / CIP 105573 / AG-3a).